Consider the following 660-residue polypeptide: MTNIIELPEVLANQIAAGEVVERPASVVKELVENAIDAKSSQITVEIEESGLKMIQVTDNGEGMSHEDLPLSLRRHATSKIKSQSDLFRIRTLGFRGEALPSVASISKITIKTATKEVTHGSLLIATGGEIETLEAISTPTGTKIKVENLFYNTPARLKYMKSLQAELAHIVDVVNRLSLAHPEVAFTLISDGRQLTQTSGTGDLRQAIAGIYGLNTTKKMLAISNADLDFEVSGYVSLPELTRANRNYMTILVNGRYIKNFLLNRAILDGYGSKLMVGRFPIVVIDIQIDPYLADVNVHPTKQEVRISKERELMALISTAISESLKEQDLIPDALENLAKSSTRHFSKPEQTQLPLQSRGLYYDPQKNDFFVKESAVSEKIPETDFYSGAVDNSVKVEKVELLPHSEEVIGPSSVKHASRPQNTFTETDHPNLDLKNRQKLSQMLTRLENEGQSVFPELDYFGQMHGTYLFAQGKDGLFIIDQHAAQERVKYEYYRDKIGEVDSSLQQLLVPYLFEFSGSDFINLQEKMALLNEVGIFLEVYGHNTFILREHPIWMKEEEIASGVYEMCDMLLLTNEVSIKTYRAELAIMMSCKRSIKANHSLDDYSARNLLLQLAQCQNPYNCPHGRPVLINFSKADMEKMFRRIQENHTSLRELGKY.

It belongs to the DNA mismatch repair MutL/HexB family.

This protein is involved in the repair of mismatches in DNA. It is required for dam-dependent methyl-directed DNA mismatch repair. May act as a 'molecular matchmaker', a protein that promotes the formation of a stable complex between two or more DNA-binding proteins in an ATP-dependent manner without itself being part of a final effector complex. This Streptococcus pyogenes serotype M1 protein is DNA mismatch repair protein MutL.